The sequence spans 161 residues: Regulator of ribonuclease activity A (161 aa).

The protein belongs to the RraA family. Homotrimer. Binds to both RNA-binding sites in the C-terminal region of Rne and to RhlB.

It localises to the cytoplasm. Its function is as follows. Globally modulates RNA abundance by binding to RNase E (Rne) and regulating its endonucleolytic activity. Can modulate Rne action in a substrate-dependent manner by altering the composition of the degradosome. Modulates RNA-binding and helicase activities of the degradosome. The protein is Regulator of ribonuclease activity A of Shewanella sediminis (strain HAW-EB3).